The following is a 65-amino-acid chain: Large ribosomal subunit protein bL33c (65 aa).

Belongs to the bacterial ribosomal protein bL33 family.

It localises to the plastid. The protein resides in the chloroplast. In Porphyra purpurea (Red seaweed), this protein is Large ribosomal subunit protein bL33c (rpl33).